A 114-amino-acid polypeptide reads, in one-letter code: Amphinase-4 (114 aa).

H15 serves as the catalytic Proton acceptor. Disulfide bonds link C26–C79, C41–C85, C59–C100, and C97–C114. N-linked (GlcNAc...) asparagine glycosylation occurs at N27. 42–46 (KPVNT) contributes to the substrate binding site. Residues N67 and N91 are each glycosylated (N-linked (GlcNAc...) asparagine). H107 functions as the Proton donor in the catalytic mechanism.

Belongs to the pancreatic ribonuclease family. Monomer. There are at least five different forms arising from glycan heterogeneity.

The protein localises to the secreted. Its function is as follows. Endonuclease, hydrolyzes highly polymerized RNA, poly(U) and poly(C), and the dinucleotides CpA and UpA. Hydrolyzes rCA, rUA and rUG. Has cytotoxic activity against cultured human submaxillary gland carcinoma cells. In Lithobates pipiens (Northern leopard frog), this protein is Amphinase-4.